The sequence spans 354 residues: Divinyl chlorophyll a/b light-harvesting protein PcbF (354 aa).

The next 6 helical transmembrane spans lie at 27–47 (FIASHAAHTGMIAFGAGSNTL), 88–108 (VVTLAILHLILSMVYGAGGLL), 140–160 (FILGHHLILFGLACAWFVEWA), 201–221 (VMGGHAFLAFAEITGGCFHAI), 248–268 (AILSFSLAGIGWMAIVAAFWC), and 315–335 (TANFHYIAGFFAFQGHLWHAL).

Belongs to the PsbB/PsbC family. IsiA/Pcb subfamily. As to quaternary structure, the antenna complex consists of divinyl chlorophylls (a and b) and divinyl chlorophyll a/b binding proteins and binds more divinyl chlorophyll b than does the antenna complex from high-light-adapted Prochlorococcus. Divinyl chlorophyll a serves as cofactor. Divinyl chlorophyll b is required as a cofactor.

It localises to the cellular thylakoid membrane. Functionally, the antenna complex functions as a light receptor, it captures and delivers excitation energy to photosystems II and I. The Prochlorales pcb genes are not related to higher plant LHCs. This chain is Divinyl chlorophyll a/b light-harvesting protein PcbF (pcbF), found in Prochlorococcus marinus (strain SARG / CCMP1375 / SS120).